The chain runs to 44 residues: Photosystem I reaction center subunit IX (44 aa).

A helical transmembrane segment spans residues 7–27 (YLSVAPVLTTLWFGSLAGLLI).

This sequence belongs to the PsaJ family.

It is found in the plastid. It localises to the chloroplast thylakoid membrane. May help in the organization of the PsaE and PsaF subunits. The sequence is that of Photosystem I reaction center subunit IX from Liriodendron tulipifera (Tuliptree).